The following is a 707-amino-acid chain: Elongation factor G (707 aa).

A tr-type G domain is found at 8–290 (ERYRNIGICA…AVIEYLPSPT (283 aa)). GTP-binding positions include 17-24 (AHVDAGKT), 88-92 (DTPGH), and 142-145 (NKMD).

This sequence belongs to the TRAFAC class translation factor GTPase superfamily. Classic translation factor GTPase family. EF-G/EF-2 subfamily.

The protein resides in the cytoplasm. Functionally, catalyzes the GTP-dependent ribosomal translocation step during translation elongation. During this step, the ribosome changes from the pre-translocational (PRE) to the post-translocational (POST) state as the newly formed A-site-bound peptidyl-tRNA and P-site-bound deacylated tRNA move to the P and E sites, respectively. Catalyzes the coordinated movement of the two tRNA molecules, the mRNA and conformational changes in the ribosome. The chain is Elongation factor G from Idiomarina loihiensis (strain ATCC BAA-735 / DSM 15497 / L2-TR).